A 355-amino-acid chain; its full sequence is Peptide chain release factor 1 (355 aa).

Residue Gln232 is modified to N5-methylglutamine. A disordered region spans residues 282–309 (EQNASISAERKSQVGSGDRSERIRTYNY). Basic and acidic residues predominate over residues 289-305 (AERKSQVGSGDRSERIR).

It belongs to the prokaryotic/mitochondrial release factor family. Post-translationally, methylated by PrmC. Methylation increases the termination efficiency of RF1.

It localises to the cytoplasm. Functionally, peptide chain release factor 1 directs the termination of translation in response to the peptide chain termination codons UAG and UAA. In Desulfatibacillum aliphaticivorans, this protein is Peptide chain release factor 1.